The primary structure comprises 562 residues: Beta-hexosaminidase (562 aa).

Residues 1–22 (MVLDKMIIFHLLLWLCNVVVHA) form the signal peptide. Residues N38, N52, N111, N337, N382, N396, and N463 are each glycosylated (N-linked (GlcNAc...) asparagine).

The protein belongs to the glycosyl hydrolase 20 family.

The catalysed reaction is Hydrolysis of terminal non-reducing N-acetyl-D-hexosamine residues in N-acetyl-beta-D-hexosaminides.. Its function is as follows. Has a broad substrate specificity. This Candida albicans (Yeast) protein is Beta-hexosaminidase (HEX1).